A 236-amino-acid chain; its full sequence is Syntaxin-8 (236 aa).

The Cytoplasmic segment spans residues 1 to 215 (MAPDPWFSTY…LVDRKSTSCG (215 aa)). A coiled-coil region spans residues 42-65 (LTIRTLLKNLKVKIDLLKDLLLRA). Positions 145–207 (QKIIQEQDAG…RTEARRVTLV (63 aa)) constitute a t-SNARE coiled-coil homology domain. Ser-160 is subject to Phosphoserine. Residues 216 to 232 (MIMVILLLLVAIVVVAV) form a helical; Anchor for type IV membrane protein membrane-spanning segment. Over 233 to 236 (WPTN) the chain is Vesicular.

Belongs to the syntaxin family. In terms of assembly, forms a SNARE complex with STX7, VTI1B and VAMP8 which functions in the homotypic fusion of late endosomes. Part of the SNARE core complex containing STX7, VAMP8 and VTI1B. Interacts with VAMP8. Interacts with HECTD3. Interacts with TPC1. Post-translationally, ubiquitinated by HECTD3.

It localises to the membrane. In terms of biological role, vesicle trafficking protein that functions in the early secretory pathway, possibly by mediating retrograde transport from cis-Golgi membranes to the ER. In Mus musculus (Mouse), this protein is Syntaxin-8 (Stx8).